Consider the following 338-residue polypeptide: Acyl-CoA-binding domain-containing protein 1 (338 aa).

Residues isoleucine 11–phenylalanine 31 form a helical; Signal-anchor membrane-spanning segment. Asparagine 35 and asparagine 41 each carry an N-linked (GlcNAc...) asparagine glycan. The tract at residues alanine 69–valine 89 is disordered. Residues aspartate 77–valine 89 show a composition bias toward acidic residues. In terms of domain architecture, ACB spans leucine 94–glutamate 184. An acyl-CoA contacts are provided by residues tyrosine 126–lysine 130, lysine 152, and tyrosine 171. An N-linked (GlcNAc...) asparagine glycan is attached at asparagine 191. 4 ANK repeats span residues leucine 217–alanine 246, glutamate 250–alanine 279, glutamate 283–isoleucine 312, and aspartate 316–asparagine 338.

The protein belongs to the ACBP family. Interacts with RAP2-12. Binds to SMO1-1 and SMO1-2. Glycosylated. In seeds, localized in the outer integument. Expressed at low levels in roots, stems, leaves, flowers, and siliques, especially within seeds.

The protein resides in the cell membrane. Its subcellular location is the secreted. The protein localises to the cell wall. It is found in the endoplasmic reticulum membrane. In terms of biological role, binds medium- and long-chain acyl-CoA esters with very high affinity. Can interact in vitro with arachidonyl-CoA, barely with oleoyl-CoA, but not with palmitoyl-CoA. Confers tolerance and binds to lead ions Pb(2+), probably by promoting lead translocation from roots to shoots. May function as an intracellular carrier of acyl-CoA esters. Modulates negatively sterol synthesis during embryogenesis and gametophytes development via interactions with SMO1-1 and SMO1-2; sterols serve as lipid modulators for gene expression of homeodomain-leucine zipper IV transcription factors. The polypeptide is Acyl-CoA-binding domain-containing protein 1 (Arabidopsis thaliana (Mouse-ear cress)).